The chain runs to 150 residues: Macrodomain Ter protein (150 aa).

Belongs to the MatP family. In terms of assembly, homodimer.

Its subcellular location is the cytoplasm. Its function is as follows. Required for spatial organization of the terminus region of the chromosome (Ter macrodomain) during the cell cycle. Prevents early segregation of duplicated Ter macrodomains during cell division. Binds specifically to matS, which is a 13 bp signature motif repeated within the Ter macrodomain. In Shigella boydii serotype 18 (strain CDC 3083-94 / BS512), this protein is Macrodomain Ter protein.